The sequence spans 433 residues: L-2-hydroxyglutarate dehydrogenase, mitochondrial (433 aa).

This sequence belongs to the L2HGDH family. It depends on FAD as a cofactor.

It localises to the mitochondrion. The enzyme catalyses (S)-2-hydroxyglutarate + A = 2-oxoglutarate + AH2. This is L-2-hydroxyglutarate dehydrogenase, mitochondrial from Caenorhabditis elegans.